Reading from the N-terminus, the 368-residue chain is Alkaline phosphatase L (368 aa).

Residues 1–23 (MFKRSLIAASLSVAALVSAQAMA) form the signal peptide.

This sequence belongs to the PstS family. Homodimer.

Its subcellular location is the secreted. It is found in the periplasm. It carries out the reaction a phosphate monoester + H2O = an alcohol + phosphate. Has both a phosphomonoesterase and phosphodiesterase activity. This chain is Alkaline phosphatase L, found in Pseudomonas aeruginosa (strain ATCC 15692 / DSM 22644 / CIP 104116 / JCM 14847 / LMG 12228 / 1C / PRS 101 / PAO1).